The sequence spans 284 residues: Non-selective voltage-gated ion channel VDAC3 (284 aa).

An N-acetylcysteine modification is found at Cys-2. The residue at position 4 (Thr-4) is a Phosphothreonine. Lys-12, Lys-15, and Lys-20 each carry N6-acetyllysine. Beta stranded transmembrane passes span Met-26–Ser-35 and Val-39–Ala-48. Lys-54 is covalently cross-linked (Glycyl lysine isopeptide (Lys-Gly) (interchain with G-Cter in ubiquitin)). 3 beta stranded membrane-spanning segments follow: residues Ala-55–Val-65, Leu-70–Asn-77, and Thr-81–Asn-90. Lys-91 bears the N6-acetyllysine mark. Residues Leu-96–Val-105 traverse the membrane as a beta stranded segment. Glycyl lysine isopeptide (Lys-Gly) (interchain with G-Cter in ubiquitin) cross-links involve residues Lys-110 and Lys-111. The next 10 beta stranded transmembrane spans lie at Ser-112–Arg-121, Phe-124–Asp-131, Thr-138–Ala-146, Leu-151–Asp-159, Lys-164–Ala-176, Phe-179–Asn-186, Glu-190–Val-199, Ile-203–Thr-212, Arg-219–Leu-228, and Thr-232–Asn-239. Ser-242 is subject to Phosphoserine. NAD(+)-binding positions include Leu-243–Gly-245 and Ser-261–Asp-265. The next 2 membrane-spanning stretches (beta stranded) occupy residues Leu-243–Leu-252 and Gly-255–Ile-264. N6-acetyllysine; alternate is present on Lys-267. Lys-267 participates in a covalent cross-link: Glycyl lysine isopeptide (Lys-Gly) (interchain with G-Cter in ubiquitin); alternate. A beta stranded membrane pass occupies residues His-274–Glu-283.

It belongs to the eukaryotic mitochondrial porin family. Interacts with ARMC12 in a TBC1D21-dependent manner. Interacts with MISFA. Ubiquitinated by PRKN during mitophagy, leading to its degradation and enhancement of mitophagy. Deubiquitinated by USP30.

The protein localises to the mitochondrion outer membrane. It is found in the membrane. The enzyme catalyses chloride(in) = chloride(out). It carries out the reaction K(+)(in) = K(+)(out). Functionally, non-selective voltage-gated ion channel that mediates the transport of anions and cations through the mitochondrion outer membrane and plasma membrane. Forms a high-conducting channel with a stable open state and a voltage-induced closure with a mild preference for anions over cations. Involved in male fertility and sperm mitochondrial sheath formation. In Pongo abelii (Sumatran orangutan), this protein is Non-selective voltage-gated ion channel VDAC3.